We begin with the raw amino-acid sequence, 375 residues long: 23S rRNA (uracil(747)-C(5))-methyltransferase RlmC (375 aa).

Positions 3, 11, 14, and 87 each coordinate [4Fe-4S] cluster. Residues Q212, F241, E262, and N307 each contribute to the S-adenosyl-L-methionine site. Catalysis depends on C334, which acts as the Nucleophile.

This sequence belongs to the class I-like SAM-binding methyltransferase superfamily. RNA M5U methyltransferase family. RlmC subfamily.

The catalysed reaction is uridine(747) in 23S rRNA + S-adenosyl-L-methionine = 5-methyluridine(747) in 23S rRNA + S-adenosyl-L-homocysteine + H(+). Its function is as follows. Catalyzes the formation of 5-methyl-uridine at position 747 (m5U747) in 23S rRNA. The protein is 23S rRNA (uracil(747)-C(5))-methyltransferase RlmC of Escherichia coli O6:H1 (strain CFT073 / ATCC 700928 / UPEC).